The chain runs to 325 residues: G/U mismatch-specific uracil DNA glycosylase (325 aa).

A compositionally biased stretch (basic and acidic residues) spans 1 to 11; the sequence is MNDIETRDTGT. Residues 1–50 are disordered; that stretch reads MNDIETRDTGTKNDNSSEFNLSVKSHKRKRSFDDENLELEESREETSGGI. Polar residues predominate over residues 12–23; that stretch reads KNDNSSEFNLSV. Residues 34 to 43 show a composition bias toward acidic residues; that stretch reads DENLELEESR.

It belongs to the uracil-DNA glycosylase (UDG) superfamily. TDG/mug family.

The protein resides in the nucleus. It carries out the reaction Specifically hydrolyzes mismatched double-stranded DNA and polynucleotides, releasing free uracil.. Removes uracil from G/U mispairs in ssDNA. Also corrects G/G mispairs. Does not catalyze the removal of thymine from G/T mispairs. This is G/U mismatch-specific uracil DNA glycosylase (thp1) from Schizosaccharomyces pombe (strain 972 / ATCC 24843) (Fission yeast).